A 400-amino-acid chain; its full sequence is Phosphoglycerate kinase (400 aa).

Substrate contacts are provided by residues 22–24 (DFN), arginine 38, 61–64 (HLGR), arginine 119, and arginine 152. ATP contacts are provided by residues lysine 205, glycine 296, glutamate 327, and 353-356 (GGDT).

This sequence belongs to the phosphoglycerate kinase family. Monomer.

Its subcellular location is the cytoplasm. The enzyme catalyses (2R)-3-phosphoglycerate + ATP = (2R)-3-phospho-glyceroyl phosphate + ADP. It participates in carbohydrate degradation; glycolysis; pyruvate from D-glyceraldehyde 3-phosphate: step 2/5. The chain is Phosphoglycerate kinase from Campylobacter jejuni subsp. doylei (strain ATCC BAA-1458 / RM4099 / 269.97).